The primary structure comprises 345 residues: 4-hydroxy-2-oxovalerate aldolase 3 (345 aa).

A Pyruvate carboxyltransferase domain is found at isoleucine 8–glutamine 260. Arginine 16–aspartate 17 contacts substrate. Aspartate 17 is a binding site for Mn(2+). The active-site Proton acceptor is histidine 20. Substrate is bound by residues serine 170 and histidine 199. 2 residues coordinate Mn(2+): histidine 199 and histidine 201. Residue tyrosine 290 participates in substrate binding.

It belongs to the 4-hydroxy-2-oxovalerate aldolase family.

The catalysed reaction is (S)-4-hydroxy-2-oxopentanoate = acetaldehyde + pyruvate. This chain is 4-hydroxy-2-oxovalerate aldolase 3 (aphG), found in Comamonas testosteroni (Pseudomonas testosteroni).